The sequence spans 587 residues: 5-aminolevulinate synthase, erythroid-specific, mitochondrial (587 aa).

Residues 1 to 49 (MVTAAMLLQRCPVLIRSPTGLLGKMIKTHQFLFGIGRCPILATQGPSFS) constitute a mitochondrion transit peptide. Arg163 lines the succinyl-CoA pocket. Pyridoxal 5'-phosphate contacts are provided by Cys258 and Phe259. Residues Ser280 and Lys299 each coordinate succinyl-CoA. Pyridoxal 5'-phosphate contacts are provided by Ser332, His360, and Thr388. The active site involves Lys391. At Lys391 the chain carries N6-(pyridoxal phosphate)lysine. Thr420 and Thr421 together coordinate pyridoxal 5'-phosphate. Position 508 (Thr508) interacts with succinyl-CoA.

The protein belongs to the class-II pyridoxal-phosphate-dependent aminotransferase family. Homodimer. Interacts with SUCLA2. It depends on pyridoxal 5'-phosphate as a cofactor.

The protein localises to the mitochondrion inner membrane. The enzyme catalyses succinyl-CoA + glycine + H(+) = 5-aminolevulinate + CO2 + CoA. It functions in the pathway porphyrin-containing compound metabolism; protoporphyrin-IX biosynthesis; 5-aminolevulinate from glycine: step 1/1. Its function is as follows. Catalyzes the pyridoxal 5'-phosphate (PLP)-dependent condensation of succinyl-CoA and glycine to form aminolevulinic acid (ALA), with CoA and CO2 as by-products. Contributes significantly to heme formation during erythropoiesis. The polypeptide is 5-aminolevulinate synthase, erythroid-specific, mitochondrial (ALAS2) (Bos taurus (Bovine)).